Reading from the N-terminus, the 308-residue chain is Carbamate kinase (308 aa).

It belongs to the carbamate kinase family.

The protein localises to the cytoplasm. It carries out the reaction hydrogencarbonate + NH4(+) + ATP = carbamoyl phosphate + ADP + H2O + H(+). This Synechocystis sp. (strain ATCC 27184 / PCC 6803 / Kazusa) protein is Carbamate kinase.